The following is a 153-amino-acid chain: Ribosomal RNA large subunit methyltransferase H (153 aa).

S-adenosyl-L-methionine is bound by residues Leu-70, Gly-102, and 121 to 126 (LSRMTF).

This sequence belongs to the RNA methyltransferase RlmH family. In terms of assembly, homodimer.

The protein resides in the cytoplasm. It catalyses the reaction pseudouridine(1915) in 23S rRNA + S-adenosyl-L-methionine = N(3)-methylpseudouridine(1915) in 23S rRNA + S-adenosyl-L-homocysteine + H(+). In terms of biological role, specifically methylates the pseudouridine at position 1915 (m3Psi1915) in 23S rRNA. This is Ribosomal RNA large subunit methyltransferase H from Geobacter sulfurreducens (strain ATCC 51573 / DSM 12127 / PCA).